The primary structure comprises 109 residues: Cell division protein ZapA (109 aa).

The stretch at 21 to 99 forms a coiled coil; the sequence is PEQLDALNQA…IEQALLEQGR (79 aa).

It belongs to the ZapA family. Type 1 subfamily. In terms of assembly, homodimer. Interacts with FtsZ.

The protein resides in the cytoplasm. Functionally, activator of cell division through the inhibition of FtsZ GTPase activity, therefore promoting FtsZ assembly into bundles of protofilaments necessary for the formation of the division Z ring. It is recruited early at mid-cell but it is not essential for cell division. This chain is Cell division protein ZapA, found in Edwardsiella ictaluri (strain 93-146).